A 208-amino-acid chain; its full sequence is Thiamine-phosphate synthase (208 aa).

Residues 38–42 (QYRSK) and Asn-70 contribute to the 4-amino-2-methyl-5-(diphosphooxymethyl)pyrimidine site. Residues Asp-71 and Asp-90 each coordinate Mg(2+). Thr-109 lines the 4-amino-2-methyl-5-(diphosphooxymethyl)pyrimidine pocket. 136–138 (SAT) is a binding site for 2-[(2R,5Z)-2-carboxy-4-methylthiazol-5(2H)-ylidene]ethyl phosphate. Lys-139 lines the 4-amino-2-methyl-5-(diphosphooxymethyl)pyrimidine pocket. 2-[(2R,5Z)-2-carboxy-4-methylthiazol-5(2H)-ylidene]ethyl phosphate-binding positions include Gly-166 and 186–187 (VS).

Belongs to the thiamine-phosphate synthase family. It depends on Mg(2+) as a cofactor.

It catalyses the reaction 2-[(2R,5Z)-2-carboxy-4-methylthiazol-5(2H)-ylidene]ethyl phosphate + 4-amino-2-methyl-5-(diphosphooxymethyl)pyrimidine + 2 H(+) = thiamine phosphate + CO2 + diphosphate. It carries out the reaction 2-(2-carboxy-4-methylthiazol-5-yl)ethyl phosphate + 4-amino-2-methyl-5-(diphosphooxymethyl)pyrimidine + 2 H(+) = thiamine phosphate + CO2 + diphosphate. The enzyme catalyses 4-methyl-5-(2-phosphooxyethyl)-thiazole + 4-amino-2-methyl-5-(diphosphooxymethyl)pyrimidine + H(+) = thiamine phosphate + diphosphate. The protein operates within cofactor biosynthesis; thiamine diphosphate biosynthesis; thiamine phosphate from 4-amino-2-methyl-5-diphosphomethylpyrimidine and 4-methyl-5-(2-phosphoethyl)-thiazole: step 1/1. In terms of biological role, condenses 4-methyl-5-(beta-hydroxyethyl)thiazole monophosphate (THZ-P) and 2-methyl-4-amino-5-hydroxymethyl pyrimidine pyrophosphate (HMP-PP) to form thiamine monophosphate (TMP). The polypeptide is Thiamine-phosphate synthase (Aromatoleum aromaticum (strain DSM 19018 / LMG 30748 / EbN1) (Azoarcus sp. (strain EbN1))).